The primary structure comprises 250 residues: Probable transcriptional regulatory protein Mmc1_0479 (250 aa).

It belongs to the TACO1 family.

The protein localises to the cytoplasm. The sequence is that of Probable transcriptional regulatory protein Mmc1_0479 from Magnetococcus marinus (strain ATCC BAA-1437 / JCM 17883 / MC-1).